Here is a 174-residue protein sequence, read N- to C-terminus: Nucleoside-triphosphatase THEP1 (174 aa).

Residues glycine 7–serine 14 and cysteine 98–glycine 105 contribute to the ATP site.

The protein belongs to the THEP1 NTPase family.

It carries out the reaction a ribonucleoside 5'-triphosphate + H2O = a ribonucleoside 5'-diphosphate + phosphate + H(+). Has nucleotide phosphatase activity towards ATP, GTP, CTP, TTP and UTP. May hydrolyze nucleoside diphosphates with lower efficiency. The protein is Nucleoside-triphosphatase THEP1 of Methanothermobacter thermautotrophicus (strain ATCC 29096 / DSM 1053 / JCM 10044 / NBRC 100330 / Delta H) (Methanobacterium thermoautotrophicum).